Here is a 58-residue protein sequence, read N- to C-terminus: Photosystem II reaction center X protein (58 aa).

Residues 27–47 (IGSFLAAAAFIVVPAASFLIW) traverse the membrane as a helical segment.

It belongs to the PsbX family. Type 2 subfamily. PSII consists of a core antenna complex that captures photons, and an electron transfer chain that converts photonic excitation into a charge separation. PSII forms dimeric complexes.

The protein localises to the cellular thylakoid membrane. In terms of biological role, involved in the binding and/or turnover of quinones at the Q(B) site of Photosystem II. The protein is Photosystem II reaction center X protein of Prochlorococcus marinus (strain MIT 9211).